The following is a 60-amino-acid chain: MAQLKITQVKSYIGSKQNHRDTLRSLGLKGINTQVVKEDRPEFRGMVHTVRHLVTVEEVD.

This sequence belongs to the universal ribosomal protein uL30 family. As to quaternary structure, part of the 50S ribosomal subunit.

The protein is Large ribosomal subunit protein uL30 of Streptomyces coelicolor (strain ATCC BAA-471 / A3(2) / M145).